A 244-amino-acid polypeptide reads, in one-letter code: Transcriptional activator protein anr (244 aa).

A nucleoside 3',5'-cyclic phosphate is bound at residue 21-149 (APLCLPLSLT…RLMSREIRDD (129 aa)). In terms of domain architecture, HTH crp-type spans 159–232 (KTADERIATF…GKEVHILDSI (74 aa)). The segment at residues 192-211 (RNEIGNYLGLAVETVSRVFT) is a DNA-binding region (H-T-H motif).

Functionally, transcriptional activator of anaerobic gene expression. This Pseudomonas aeruginosa (strain ATCC 15692 / DSM 22644 / CIP 104116 / JCM 14847 / LMG 12228 / 1C / PRS 101 / PAO1) protein is Transcriptional activator protein anr (anr).